A 497-amino-acid polypeptide reads, in one-letter code: Glycerol kinase 2 (497 aa).

Residue Thr-13 participates in ADP binding. ATP-binding residues include Thr-13, Thr-14, and Ser-15. Thr-13 provides a ligand contact to sn-glycerol 3-phosphate. Arg-17 serves as a coordination point for ADP. Residues Arg-83, Glu-84, Tyr-134, and Asp-241 each coordinate sn-glycerol 3-phosphate. Residues Arg-83, Glu-84, Tyr-134, Asp-241, and Gln-242 each coordinate glycerol. Thr-263 and Gly-305 together coordinate ADP. ATP contacts are provided by Thr-263, Gly-305, Gln-309, and Gly-406. Residues Gly-406 and Asn-410 each contribute to the ADP site.

It belongs to the FGGY kinase family.

It catalyses the reaction glycerol + ATP = sn-glycerol 3-phosphate + ADP + H(+). It functions in the pathway polyol metabolism; glycerol degradation via glycerol kinase pathway; sn-glycerol 3-phosphate from glycerol: step 1/1. Functionally, key enzyme in the regulation of glycerol uptake and metabolism. Catalyzes the phosphorylation of glycerol to yield sn-glycerol 3-phosphate. This is Glycerol kinase 2 from Sulfolobus acidocaldarius (strain ATCC 33909 / DSM 639 / JCM 8929 / NBRC 15157 / NCIMB 11770).